A 101-amino-acid polypeptide reads, in one-letter code: Small ribosomal subunit protein uS14 (101 aa).

Belongs to the universal ribosomal protein uS14 family. Part of the 30S ribosomal subunit. Contacts proteins S3 and S10.

Its function is as follows. Binds 16S rRNA, required for the assembly of 30S particles and may also be responsible for determining the conformation of the 16S rRNA at the A site. The protein is Small ribosomal subunit protein uS14 of Caulobacter vibrioides (strain ATCC 19089 / CIP 103742 / CB 15) (Caulobacter crescentus).